Consider the following 268-residue polypeptide: Zygote formation protein zyg1 (268 aa).

Plays an essential role in zygote formation by inducing sexual cell fusion. Overexpressing cells eventually formed many loose mounds, in which giant multinucleate cells were surrounded by normal-sized cells. This is Zygote formation protein zyg1 (zyg1) from Dictyostelium mucoroides (Slime mold).